The chain runs to 63 residues: Large ribosomal subunit protein bL28 (63 aa).

It belongs to the bacterial ribosomal protein bL28 family.

In Citrifermentans bemidjiense (strain ATCC BAA-1014 / DSM 16622 / JCM 12645 / Bem) (Geobacter bemidjiensis), this protein is Large ribosomal subunit protein bL28.